The following is a 354-amino-acid chain: Ferrochelatase (354 aa).

Fe cation is bound by residues H204 and E306.

This sequence belongs to the ferrochelatase family.

The protein localises to the cytoplasm. It carries out the reaction heme b + 2 H(+) = protoporphyrin IX + Fe(2+). Its pathway is porphyrin-containing compound metabolism; protoheme biosynthesis; protoheme from protoporphyrin-IX: step 1/1. Functionally, catalyzes the ferrous insertion into protoporphyrin IX. The protein is Ferrochelatase of Coxiella burnetii (strain CbuG_Q212) (Coxiella burnetii (strain Q212)).